We begin with the raw amino-acid sequence, 109 residues long: Cell division protein ZapA (109 aa).

The stretch at Pro-21–Gln-97 forms a coiled coil.

This sequence belongs to the ZapA family. Type 1 subfamily. Homodimer. Interacts with FtsZ.

It localises to the cytoplasm. In terms of biological role, activator of cell division through the inhibition of FtsZ GTPase activity, therefore promoting FtsZ assembly into bundles of protofilaments necessary for the formation of the division Z ring. It is recruited early at mid-cell but it is not essential for cell division. The sequence is that of Cell division protein ZapA from Salmonella agona (strain SL483).